The sequence spans 664 residues: Prelamin-A/C (664 aa).

An N-acetylmethionine modification is found at Met1. Residues Met1–Thr24 are disordered. Residues Met1–Glu33 are head. The tract at residues Met1–Ala130 is interaction with MLIP. Phosphothreonine is present on Thr3. A Phosphoserine modification is found at Ser5. Thr10 carries the phosphothreonine modification. Phosphoserine occurs at positions 12 and 18. Thr19 is modified (phosphothreonine). Ser22 carries the post-translational modification Phosphoserine. The 357-residue stretch at Glu31–Leu387 folds into the IF rod domain. An N6-acetyllysine; alternate modification is found at Lys32. Lys32 carries the N6-succinyllysine; alternate modification. Residue Lys32 forms a Glycyl lysine isopeptide (Lys-Gly) (interchain with G-Cter in SUMO2); alternate linkage. The segment at Asp34–Val70 is coil 1A. Phosphoserine is present on residues Ser51, Ser66, and Ser71. Positions Ser71–Ala80 are linker 1. Lys78 and Lys97 each carry N6-acetyllysine. Residues Tyr81 to Thr218 form a coil 1B region. A Glycyl lysine isopeptide (Lys-Gly) (interchain with G-Cter in SUMO2) cross-link involves residue Lys97. Ser107 is modified (phosphoserine). An N6-acetyllysine mark is found at Lys108, Lys114, Lys123, Lys135, Lys144, and Lys155. An N6-acetyllysine; alternate modification is found at Lys171. Lys171 is modified (N6-succinyllysine; alternate). Residue Lys171 forms a Glycyl lysine isopeptide (Lys-Gly) (interchain with G-Cter in SUMO2); alternate linkage. Residues Lys180, Lys201, and Lys208 each carry the N6-acetyllysine modification. Lys201 is covalently cross-linked (Glycyl lysine isopeptide (Lys-Gly) (interchain with G-Cter in SUMO2); alternate). Lys201 is covalently cross-linked (Glycyl lysine isopeptide (Lys-Gly) (interchain with G-Cter in SUMO); alternate). Lys208 participates in a covalent cross-link: Glycyl lysine isopeptide (Lys-Gly) (interchain with G-Cter in SUMO2). Ser212 carries the post-translational modification Phosphoserine. Residues Lys219 and Lys233 each participate in a glycyl lysine isopeptide (Lys-Gly) (interchain with G-Cter in SUMO2) cross-link. Residues Lys219–Ala242 form a linker 2 region. 4 positions are modified to N6-acetyllysine: Lys233, Lys260, Lys265, and Lys270. Residues Asp243 to Glu383 form a coil 2 region. A Glycyl lysine isopeptide (Lys-Gly) (interchain with G-Cter in SUMO2); alternate cross-link involves residue Lys260. Residue Lys270 forms a Glycyl lysine isopeptide (Lys-Gly) (interchain with G-Cter in SUMO2); alternate linkage. Residues Ser277, Ser282, Ser301, and Ser307 each carry the phosphoserine modification. Lys311 is covalently cross-linked (Glycyl lysine isopeptide (Lys-Gly) (interchain with G-Cter in SUMO2); alternate). Lys311, Lys316, and Lys341 each carry N6-acetyllysine. Glycyl lysine isopeptide (Lys-Gly) (interchain with G-Cter in SUMO2) cross-links involve residues Lys366 and Lys378. Positions Glu384–Val442 are disordered. The tail stretch occupies residues Glu384 to Met664. Phosphoserine occurs at positions 390, 392, 395, 398, 403, 404, 406, 407, and 414. Over residues Ser403 to Ser414 the composition is skewed to low complexity. Residue Thr416 is modified to Phosphothreonine. An N6-acetyllysine modification is found at Lys417. Residues Lys417 and Lys420 each participate in a glycyl lysine isopeptide (Lys-Gly) (interchain with G-Cter in SUMO2) cross-link. Positions Lys417 to Glu422 match the Nuclear localization signal motif. Residues Ser423, Ser426, Ser429, and Ser431 each carry the phosphoserine modification. One can recognise an LTD domain in the interval Ser428–Arg545. Lys450 participates in a covalent cross-link: Glycyl lysine isopeptide (Lys-Gly) (interchain with G-Cter in SUMO2); alternate. N6-acetyllysine occurs at positions 450 and 457. Residues Ser458 and Ser463 each carry the phosphoserine modification. Glycyl lysine isopeptide (Lys-Gly) (interchain with G-Cter in SUMO2) cross-links involve residues Lys470 and Lys486. N6-acetyllysine is present on Lys486. Phosphothreonine occurs at positions 496 and 505. Phosphoserine is present on residues Ser533 and Ser546. Thr548 carries the phosphothreonine modification. Positions Asp555–Ala577 are disordered. Residues Ser568 and Ser571 each carry the phosphoserine modification. Lys597 participates in a covalent cross-link: Glycyl lysine isopeptide (Lys-Gly) (interchain with G-Cter in SUMO2); alternate. A Glycyl lysine isopeptide (Lys-Gly) (interchain with G-Cter in SUMO1); alternate cross-link involves residue Lys597. The tract at residues Ala598 to Val620 is disordered. Phosphoserine is present on residues Ser612, Ser613, Ser616, and Ser619. O-linked (GlcNAc) serine glycans are attached at residues Ser625 and Ser628. A phosphoserine mark is found at Ser628, Ser632, and Ser636. Residues Leu647 to Cys661 constitute a propeptide, removed in Lamin-A/C form. Cys661 carries the post-translational modification Cysteine methyl ester. Cys661 is lipidated: S-farnesyl cysteine. A propeptide spans Ser662–Met664 (removed in Prelamin-A/C form and in Lamin-A/C form).

This sequence belongs to the intermediate filament family. Homodimer of lamin A and lamin C. Lamin dimers then assemble into dimeric head-to-tail polymers. Ultimately, two head-to-tail polymers assemble laterally into a protofilament with a uniformly shaped rod of 3.5 nm in diameter. Interacts with lamin-associated polypeptides IA, IB and TMPO-alpha, RB1 and with emerin. Interacts with SREBF1, SREBF2, SUN2 and TMEM43. Interacts with TMEM201. Proteolytically processed isoform A interacts with NARF. Interacts with SUN1. Interacts with MLIP. Interacts with DMPK; may regulate nuclear envelope stability. Interacts with SUV39H1; the interaction increases stability of SUV39H1. Interacts with SYNE2. Interacts with ITSN1 isoform 2. Interacts with IFFO1; enables the formation of an interior nucleoskeleton that is recruited to DNA double-strand breaks. In terms of assembly, interacts with EMD. As to quaternary structure, interacts (via C-terminus) with LEMD2 (via N-terminus) (in vitro). Proteolytic cleavage of the C-terminal of 18 residues of prelamin-A/C results in the production of lamin-A/C. The prelamin-A/C maturation pathway includes farnesylation of CAAX motif by protein farnesyltransferase (FNTA and FNTB), removal of the last three amino acids (-AAX) by RCE1/FACE2 and/or ZMPSTE24, methylation of the C-terminal cysteine by ICMT and endoproteolytic removal of the last 15 C-terminal amino acids by ZMPSTE24. Proteolytic cleavage requires prior farnesylation and methylation, and absence of these blocks cleavage. Post-translationally, farnesylation of prelamin-A/C facilitates nuclear envelope targeting. In terms of processing, phosphorylation plays a key role in lamin organization, subcellular localization and nuclear envelope disintegration. Phosphorylation by CDK1 at Ser-22 and Ser-392 at the onset of mitosis drives lamin disassembly and nuclear envelope breakdown. Phosphorylation at Ser-22 and Ser-392 during interphase promotes localization to the nucleoplasm and regulates lamina assembly. Phosphorylation at Ser-22, Ser-392 and Ser-628 during interphase causes redistribution between the nucleus and the cytoplasm. Phosphorylation at Ser-22 by CDK1 regulates matrix stiffness. Phosphorylation status of Ser-22 determines its localization between double-strand break (DSB) sites and the nuclear matrix. Phosphorylated by ATR at Ser-282 in response to DNA damage, leading to lamin disassembly and nuclear envelope rupture. Phosphorylation also regulates stability in micronuclei arising from genome instability: phosphorylation at Ser-395 by ATR in response to genome instability and double-stranded DNA breaks primes LMNA for subsequent phosphorylation at Ser-392 by CDK1 and micronuclei envelope rupture. The rupture of micronuclear envelope triggers the cGAS-STING pathway thereby activating the type I interferon response and innate immunity. Acetylation by KAT8 is required for nuclear architecture. Post-translationally, sumoylation is necessary for the localization to the nuclear envelope.

It is found in the nucleus lamina. The protein localises to the nucleus envelope. The protein resides in the nucleus. Its subcellular location is the nucleoplasm. It localises to the nucleus matrix. Its function is as follows. Lamins are intermediate filament proteins that assemble into a filamentous meshwork, and which constitute the major components of the nuclear lamina, a fibrous layer on the nucleoplasmic side of the inner nuclear membrane. Lamins provide a framework for the nuclear envelope, bridging the nuclear envelope and chromatin, thereby playing an important role in nuclear assembly, chromatin organization, nuclear membrane and telomere dynamics. Lamin A and C also regulate matrix stiffness by conferring nuclear mechanical properties. The structural integrity of the lamina is strictly controlled by the cell cycle, as seen by the disintegration and formation of the nuclear envelope in prophase and telophase, respectively. Lamin A and C are present in equal amounts in the lamina of mammals. Also invoved in DNA repair: recruited by DNA repair proteins XRCC4 and IFFO1 to the DNA double-strand breaks (DSBs) to prevent chromosome translocation by immobilizing broken DNA ends. Required for normal development of peripheral nervous system and skeletal muscle and for muscle satellite cell proliferation. Required for osteoblastogenesis and bone formation. Also prevents fat infiltration of muscle and bone marrow, helping to maintain the volume and strength of skeletal muscle and bone. Required for cardiac homeostasis. Functionally, prelamin-A/C can accelerate smooth muscle cell senescence. It acts to disrupt mitosis and induce DNA damage in vascular smooth muscle cells (VSMCs), leading to mitotic failure, genomic instability, and premature senescence. The polypeptide is Prelamin-A/C (LMNA) (Sus scrofa (Pig)).